Here is a 173-residue protein sequence, read N- to C-terminus: Transcription factor E (173 aa).

In terms of domain architecture, HTH TFE/IIEalpha-type spans 3 to 86 (DDPLVKSLLT…SWKFEEQEVI (84 aa)).

Belongs to the TFE family. Monomer. Interaction with RNA polymerase subunits RpoF and RpoE is necessary for Tfe stimulatory transcription activity. Able to interact with Tbp and RNA polymerase in the absence of DNA promoter. Interacts both with the preinitiation and elongation complexes.

Its function is as follows. Transcription factor that plays a role in the activation of archaeal genes transcribed by RNA polymerase. Facilitates transcription initiation by enhancing TATA-box recognition by TATA-box-binding protein (Tbp), and transcription factor B (Tfb) and RNA polymerase recruitment. Not absolutely required for transcription in vitro, but particularly important in cases where Tbp or Tfb function is not optimal. It dynamically alters the nucleic acid-binding properties of RNA polymerases by stabilizing the initiation complex and destabilizing elongation complexes. Seems to translocate with the RNA polymerase following initiation and acts by binding to the non template strand of the transcription bubble in elongation complexes. This chain is Transcription factor E, found in Methanobrevibacter smithii (strain ATCC 35061 / DSM 861 / OCM 144 / PS).